Consider the following 348-residue polypeptide: Nuclear receptor subfamily 1 group I member 3 (348 aa).

Residues 8–83 (LRNCVVCGDQ…AGMRKDMILS (76 aa)) constitute a DNA-binding region (nuclear receptor). The segment at 11–31 (CVVCGDQATGYHFNALTCEGC) adopts an NR C4-type zinc-finger fold. At Thr-38 the chain carries Phosphothreonine; by PKC. Residues 47-71 (CPFAGSCEVSKTQRRHCPACRLQKC) form an NR C4-type zinc finger. The 240-residue stretch at 109-348 (EQEELIRTLL…MMPLLQEICS (240 aa)) folds into the NR LBD domain.

This sequence belongs to the nuclear hormone receptor family. NR1 subfamily. Heterodimer of NR1I3 and RXR. Interacts with PSMC4. Interacts with ECT2. Directly interacts with DNAJC7; this complex may also include HSP90. Interacts with CRY1. Interacts with CRY2 in a ligand-dependent manner. In terms of processing, phosphorylated at Thr-38 by PKC, dephosphorylation of Thr-38 is required for nuclear translocation and activation.

The protein resides in the nucleus. It is found in the cytoplasm. The protein localises to the cytoskeleton. Its function is as follows. Binds and transactivates the retinoic acid response elements that control expression of the retinoic acid receptor beta 2 and alcohol dehydrogenase 3 genes. Transactivates both the phenobarbital responsive element module of the human CYP2B6 gene and the CYP3A4 xenobiotic response element. The protein is Nuclear receptor subfamily 1 group I member 3 (NR1I3) of Pan troglodytes (Chimpanzee).